The chain runs to 102 residues: Ferredoxin, 2Fe-2S (102 aa).

Residues Cys-11, Cys-24, Cys-56, and Cys-60 each coordinate [2Fe-2S] cluster.

It belongs to the 2Fe2S Shethna-type ferredoxin family. The cofactor is [2Fe-2S] cluster.

Its function is as follows. Ferredoxins are iron-sulfur proteins that transfer electrons in a wide variety of metabolic reactions. The polypeptide is Ferredoxin, 2Fe-2S (Clostridium pasteurianum).